The chain runs to 232 residues: Glycerol-3-phosphate acyltransferase (232 aa).

A run of 6 helical transmembrane segments spans residues 4–24 (FLAIIVVAYLIGSIPTSIIAG), 56–76 (VVTLIDIAKGTIAAVPVVGFF), 90–110 (IALSLIAGMAAVIGHVFTVFA), 124–144 (MLIGIAPVSMLMVIGIFLLAV), 152–172 (VGSILAAIAFPLIIAIRKYVF), and 191–211 (SLDYHLLIFGGIVAVAIIYTH).

This sequence belongs to the PlsY family. In terms of assembly, probably interacts with PlsX.

It localises to the cell inner membrane. It catalyses the reaction an acyl phosphate + sn-glycerol 3-phosphate = a 1-acyl-sn-glycero-3-phosphate + phosphate. Its pathway is lipid metabolism; phospholipid metabolism. In terms of biological role, catalyzes the transfer of an acyl group from acyl-phosphate (acyl-PO(4)) to glycerol-3-phosphate (G3P) to form lysophosphatidic acid (LPA). This enzyme utilizes acyl-phosphate as fatty acyl donor, but not acyl-CoA or acyl-ACP. This Chlorobaculum tepidum (strain ATCC 49652 / DSM 12025 / NBRC 103806 / TLS) (Chlorobium tepidum) protein is Glycerol-3-phosphate acyltransferase.